Reading from the N-terminus, the 300-residue chain is N-acetylmuramic acid 6-phosphate etherase 1 (300 aa).

The region spanning 59-222 (AAERFKKGGR…STGIMVKVGN (164 aa)) is the SIS domain. Glu87 (proton donor) is an active-site residue. Glu118 is an active-site residue.

The protein belongs to the GCKR-like family. MurNAc-6-P etherase subfamily. As to quaternary structure, homodimer.

It carries out the reaction N-acetyl-D-muramate 6-phosphate + H2O = N-acetyl-D-glucosamine 6-phosphate + (R)-lactate. The protein operates within amino-sugar metabolism; N-acetylmuramate degradation. Specifically catalyzes the cleavage of the D-lactyl ether substituent of MurNAc 6-phosphate, producing GlcNAc 6-phosphate and D-lactate. This is N-acetylmuramic acid 6-phosphate etherase 1 from Enterococcus faecalis (strain ATCC 700802 / V583).